The following is a 71-amino-acid chain: Lantibiotic Flvbeta.c (71 aa).

Positions 1-33 are cleaved as a propeptide — cleaved by FlvT; sequence MENKFDMEKFKKLAAVVSEDELDTLLDETTVGA. The segment at residues 35–39 is a cross-link (lanthionine (Ser-Cys); by FlvM2); that stretch reads SSNDC. 2,3-didehydroalanine (Ser); by FlvM2 is present on Ser36. 3 consecutive cross-links (beta-methyllanthionine (Thr-Cys); by FlvM2) follow at residues 54-60, 62-65, and 66-69; these read TSKFDWC, TGAC, and TTSC.

In terms of processing, contains LL-lanthionine and DL-beta-methyllanthionine, when coepressed in E.coli with the flavecin synthetase FlvM2.

The protein localises to the secreted. Functionally, lanthionine-containing peptide antibiotic (lantibiotic) that is probably active on Gram-positive bacteria, since its analog [Del1]Flvbeta.c shows antibacterial activity against M.luteus. This activity is not synergistically enhanced by [Del2]Flvalpha.a, an analog of Flvalpha.a, which is encoded by the same operon than Flvbeta.c. The bactericidal activity of lantibiotics is based on depolarization of energized bacterial cytoplasmic membranes, initiated by the formation of aqueous transmembrane pores. The protein is Lantibiotic Flvbeta.c of Ruminococcus flavefaciens.